A 536-amino-acid chain; its full sequence is Potassium voltage-gated channel protein shk-1 (536 aa).

2 disordered regions span residues 1–31 and 87–131; these read MRFG…NKEK and AAEM…HPYT. The Cytoplasmic portion of the chain corresponds to 1–275; sequence MRFGGQRRCI…EYPDSSLSAR (275 aa). A compositionally biased stretch (polar residues) spans 116–131; it reads QRGTPDTSSTQGHPYT. Residues 276 to 296 form a helical membrane-spanning segment; the sequence is IIAFISIAVIALSIISFCWET. Residues 297-322 are Extracellular-facing; it reads VPSDIEEKPINNSATAELLDEMDEKH. A helical transmembrane segment spans residues 323 to 343; it reads YSPFFWIELMCILWFTIELIL. The Cytoplasmic portion of the chain corresponds to 344–356; that stretch reads RFISCPCKVTFAT. A helical membrane pass occupies residues 357–377; that stretch reads SVLNIIDFVAIAPFFVNFFFA. At 378–425 the chain is on the extracellular side; it reads DTSKSNSSMSFAVLRVLRLVRVFRVFKLSRHSVGLQILGKTFRSSVQE. The helical; Voltage-sensor transmembrane segment at 426 to 446 threads the bilayer; that stretch reads FCLLIFFMAIALVLFASGMYF. The Cytoplasmic segment spans residues 447 to 458; it reads AEQGEPNSKFTS. A helical transmembrane segment spans residues 459 to 479; it reads IPASFWFVLVTMTTVGYGDLV. Residues 480-486 lie on the Extracellular side of the membrane; sequence PLSPFGK. The helical transmembrane segment at 487–507 threads the bilayer; it reads VVGGMCAMIGVLTLALPVPII. At 508 to 536 the chain is on the cytoplasmic side; sequence VANFKHFYRQENRLASMKSKGDDADDDIA.

Belongs to the potassium channel family. A (Shaker) (TC 1.A.1.2) subfamily. Shaker sub-subfamily. Expressed in a variety of interneurons and sensory neurons, as well as body wall muscle.

The protein resides in the membrane. Functionally, mediates the voltage-dependent potassium ion permeability of excitable membranes. Has an important role in repolarization and in regulating the pattern of action potential firing. Isoform a expresses currents in a more depolarized voltage range than isoform d. The protein is Potassium voltage-gated channel protein shk-1 of Caenorhabditis elegans.